A 1382-amino-acid polypeptide reads, in one-letter code: Y' element ATP-dependent helicase protein 1 copy 4 (1382 aa).

The region spanning 383–560 is the Helicase ATP-binding domain; that stretch reads EIYMADTPSV…LQRIGLTGLA (178 aa). Residue 396–403 coordinates ATP; sequence APPGYGKT. Positions 617–766 constitute a Helicase C-terminal domain; that stretch reads KLLLALFEIE…EFYGLESKKG (150 aa). Disordered stretches follow at residues 840 to 864 and 880 to 1007; these read ANASTNATTNSSTNATTTASTNVRT and TTES…DINK. Residues 880 to 983 show a composition bias toward low complexity; sequence TTESTNSSTN…ATTTESTNAS (104 aa). Residues 984-1007 show a composition bias toward basic and acidic residues; the sequence is AKEDANKDGNAEDNRFHPVTDINK.

This sequence belongs to the helicase family. Yeast subtelomeric Y' repeat subfamily.

In terms of biological role, catalyzes DNA unwinding and is involved in telomerase-independent telomere maintenance. This Saccharomyces cerevisiae (strain ATCC 204508 / S288c) (Baker's yeast) protein is Y' element ATP-dependent helicase protein 1 copy 4 (YRF1-4).